A 441-amino-acid chain; its full sequence is Keratin, type I cytoskeletal 15 (441 aa).

The head stretch occupies residues 2 to 91 (LLLGHASTST…GGSDLLLGTS (90 aa)). Residues 92–127 (GKEAMQNLNDRLASYLDKVRSLEGKNHELELKIKDW) form a coil 1A region. The 316-residue stretch at 92–407 (GKEAMQNLND…MLLDSEDSKG (316 aa)) folds into the IF rod domain. The linker 1 stretch occupies residues 128 to 149 (YSQVIPGTGGPDARDYGHLEKE). Positions 150-241 (IEDLQNKVNN…KNHEEDMKAA (92 aa)) are coil 1B. The segment at 242 to 261 (SSGIAGQVNVELDAAPGTNL) is linker 12. A coil 2 region spans residues 262–403 (LDELDACRRD…ATYRMLLDSE (142 aa)). Residues 404–441 (DSKGSIINHKILTAIEKLVDGIVLSTEVLEKQIPVLSY) are tail.

It belongs to the intermediate filament family. As to quaternary structure, heterotetramer of two type I and two type II keratins. Expressed in skin.

The polypeptide is Keratin, type I cytoskeletal 15 (KRT15) (Protopterus aethiopicus (Marbled lungfish)).